The primary structure comprises 122 residues: Prefoldin subunit 1 (122 aa).

Residue Ala2 is modified to N-acetylalanine.

The protein belongs to the prefoldin subunit beta family. As to quaternary structure, heterohexamer of two PFD-alpha type and four PFD-beta type subunits.

In terms of biological role, binds specifically to cytosolic chaperonin (c-CPN) and transfers target proteins to it. Binds to nascent polypeptide chain and promotes folding in an environment in which there are many competing pathways for nonnative proteins. The sequence is that of Prefoldin subunit 1 (PFDN1) from Homo sapiens (Human).